The chain runs to 257 residues: Probable branched-chain amino acid transport ATP-binding protein LivG (257 aa).

Positions 8 to 253 (LRTENIVKYF…VLSDPKVVEI (246 aa)) constitute an ABC transporter domain. An ATP-binding site is contributed by 40-47 (GPNGSGKS).

Belongs to the ABC transporter superfamily. Monomer.

In terms of biological role, probable component of a branched-chain amino-acid transport system. This chain is Probable branched-chain amino acid transport ATP-binding protein LivG (livG), found in Methanocaldococcus jannaschii (strain ATCC 43067 / DSM 2661 / JAL-1 / JCM 10045 / NBRC 100440) (Methanococcus jannaschii).